Consider the following 212-residue polypeptide: Large ribosomal subunit protein uL3 (212 aa).

Positions 135–155 are enriched in polar residues; sequence ATHGNSVSHRAHGSTGQNQSP. The tract at residues 135-162 is disordered; sequence ATHGNSVSHRAHGSTGQNQSPGKVFKGK. Gln153 bears the N5-methylglutamine mark.

This sequence belongs to the universal ribosomal protein uL3 family. As to quaternary structure, part of the 50S ribosomal subunit. Forms a cluster with proteins L14 and L19. Post-translationally, methylated by PrmB.

In terms of biological role, one of the primary rRNA binding proteins, it binds directly near the 3'-end of the 23S rRNA, where it nucleates assembly of the 50S subunit. In Psychrobacter arcticus (strain DSM 17307 / VKM B-2377 / 273-4), this protein is Large ribosomal subunit protein uL3.